Consider the following 259-residue polypeptide: L-cystine import ATP-binding protein TcyN (259 aa).

The ABC transporter domain maps to 2–239 (IEIKNIHKQF…TKKDRTRQFL (238 aa)). 34–41 (GPSGSGKT) is an ATP binding site.

The protein belongs to the ABC transporter superfamily. L-cystine importer (TC 3.A.1.3.13) family. As to quaternary structure, the complex is composed of two ATP-binding proteins (TcyN), two transmembrane proteins (TcyL and TcyM) and two solute-binding proteins (TcyJ and TcyK).

Its subcellular location is the cell membrane. Its function is as follows. Part of the ABC transporter complex TcyJKLMN involved in L-cystine import. Responsible for energy coupling to the transport system. Is also involved in cystathionine, djenkolate, and S-methylcysteine transport. In Bacillus subtilis (strain 168), this protein is L-cystine import ATP-binding protein TcyN (tcyN).